Consider the following 98-residue polypeptide: NADH-ubiquinone oxidoreductase chain 4L (98 aa).

Helical transmembrane passes span T2 to F22, S29 to L49, and I61 to V81.

It belongs to the complex I subunit 4L family. In terms of assembly, core subunit of respiratory chain NADH dehydrogenase (Complex I) which is composed of 45 different subunits.

The protein resides in the mitochondrion inner membrane. It carries out the reaction a ubiquinone + NADH + 5 H(+)(in) = a ubiquinol + NAD(+) + 4 H(+)(out). In terms of biological role, core subunit of the mitochondrial membrane respiratory chain NADH dehydrogenase (Complex I) which catalyzes electron transfer from NADH through the respiratory chain, using ubiquinone as an electron acceptor. Part of the enzyme membrane arm which is embedded in the lipid bilayer and involved in proton translocation. The chain is NADH-ubiquinone oxidoreductase chain 4L (MT-ND4L) from Avahi cleesei (Cleese's woolly lemur).